We begin with the raw amino-acid sequence, 21 residues long: Dahlein-5.6 (21 aa).

As to expression, expressed by the skin dorsal glands.

It localises to the secreted. In terms of biological role, has no antimicrobial activity. Strongly inhibits the formation of NO by neuronal nitric oxide synthase at micromolar concentrations. The protein is Dahlein-5.6 of Ranoidea dahlii (Dahl's aquatic frog).